The sequence spans 225 residues: Leucyl/phenylalanyl-tRNA--protein transferase (225 aa).

Belongs to the L/F-transferase family.

It is found in the cytoplasm. The catalysed reaction is N-terminal L-lysyl-[protein] + L-leucyl-tRNA(Leu) = N-terminal L-leucyl-L-lysyl-[protein] + tRNA(Leu) + H(+). It carries out the reaction N-terminal L-arginyl-[protein] + L-leucyl-tRNA(Leu) = N-terminal L-leucyl-L-arginyl-[protein] + tRNA(Leu) + H(+). It catalyses the reaction L-phenylalanyl-tRNA(Phe) + an N-terminal L-alpha-aminoacyl-[protein] = an N-terminal L-phenylalanyl-L-alpha-aminoacyl-[protein] + tRNA(Phe). In terms of biological role, functions in the N-end rule pathway of protein degradation where it conjugates Leu, Phe and, less efficiently, Met from aminoacyl-tRNAs to the N-termini of proteins containing an N-terminal arginine or lysine. This chain is Leucyl/phenylalanyl-tRNA--protein transferase, found in Nitrobacter winogradskyi (strain ATCC 25391 / DSM 10237 / CIP 104748 / NCIMB 11846 / Nb-255).